The primary structure comprises 355 residues: Heterogeneous nuclear ribonucleoprotein D0 (355 aa).

The interval 1–92 (MSEEQFGGDG…SPRHSEAATA (92 aa)) is disordered. Residue Ser-2 is modified to N-acetylserine. Composition is skewed to low complexity over residues 11–20 (AAAAATAAVG) and 27–42 (EGAM…AAAG). Residues 43–58 (SGAGTGGGTASGGTEG) show a composition bias toward gly residues. The span at 64–73 (EGAKIDASKN) shows a compositional bias: basic and acidic residues. Phosphoserine is present on Ser-71. Lys-72 participates in a covalent cross-link: Glycyl lysine isopeptide (Lys-Gly) (interchain with G-Cter in SUMO2). Phosphoserine occurs at positions 80, 82, and 83. Position 91 is a phosphothreonine (Thr-91). RRM domains follow at residues 97 to 179 (WKMF…KTKE) and 182 to 261 (KKIF…MSKE). Lys-119 is modified (N6-methyllysine). Residue Thr-127 is modified to Phosphothreonine. A Glycyl lysine isopeptide (Lys-Gly) (interchain with G-Cter in SUMO2) cross-link involves residue Lys-129. Lys-165 bears the N6-acetyllysine mark. A Phosphoserine modification is found at Ser-190. A Phosphothreonine modification is found at Thr-193. Lys-197 participates in a covalent cross-link: Glycyl lysine isopeptide (Lys-Gly) (interchain with G-Cter in SUMO2). 2 positions are modified to N6-acetyllysine: Lys-243 and Lys-251. Tyr-263 carries the post-translational modification Omega-N-methylarginine. Ser-271 carries the phosphoserine modification. Arg-272 carries the post-translational modification Omega-N-methylarginine. Gly-273 is modified (N6-acetyllysine). Omega-N-methylarginine is present on residues Arg-278, Arg-280, and Arg-282. Gln-292 bears the N6-acetyllysine mark. Arg-345 is subject to Asymmetric dimethylarginine; alternate. Arg-345 carries the dimethylated arginine; alternate modification. Omega-N-methylarginine; alternate is present on Arg-345.

As to quaternary structure, identified in a IGF2BP1-dependent mRNP granule complex containing untranslated mRNAs. Part of a complex associated with the FOS mCRD domain and consisting of PABPC1, PAIP1, CSDE1/UNR and SYNCRIP. Interacts with IGF2BP2. Interacts with GTPBP1. Interacts with EIF4G1; the interaction requires RNA. Interacts with EIF3B and RPS3. In terms of processing, arg-345 is dimethylated, probably to asymmetric dimethylarginine. Post-translationally, methylated by PRMT1, in an insulin-dependent manner. The PRMT1-mediated methylation regulates tyrosine phosphorylation.

The protein localises to the nucleus. It localises to the cytoplasm. In terms of biological role, binds with high affinity to RNA molecules that contain AU-rich elements (AREs) found within the 3'-UTR of many proto-oncogenes and cytokine mRNAs. Also binds to double- and single-stranded DNA sequences in a specific manner and functions a transcription factor. Each of the RNA-binding domains specifically can bind solely to a single-stranded non-monotonous 5'-UUAG-3' sequence and also weaker to the single-stranded 5'-TTAGGG-3' telomeric DNA repeat. Binds RNA oligonucleotides with 5'-UUAGGG-3' repeats more tightly than the telomeric single-stranded DNA 5'-TTAGGG-3' repeats. Binding of RRM1 to DNA inhibits the formation of DNA quadruplex structure which may play a role in telomere elongation. May be involved in translationally coupled mRNA turnover. Implicated with other RNA-binding proteins in the cytoplasmic deadenylation/translational and decay interplay of the FOS mRNA mediated by the major coding-region determinant of instability (mCRD) domain. May play a role in the regulation of the rhythmic expression of circadian clock core genes. Directly binds to the 3'UTR of CRY1 mRNA and induces CRY1 rhythmic translation. May also be involved in the regulation of PER2 translation. This chain is Heterogeneous nuclear ribonucleoprotein D0 (HNRNPD), found in Homo sapiens (Human).